Here is a 200-residue protein sequence, read N- to C-terminus: ADP-ribose 1''-phosphate phosphatase (200 aa).

A Macro domain is found at 1 to 200 (MDPPSVRSKI…EVTVVRPHGG (200 aa)). Substrate contacts are provided by residues 15-17 (GDL), 29-31 (ACN), 36-41 (WGKGIA), and 169-175 (FNAGLFG).

This sequence belongs to the POA1 family.

It carries out the reaction ADP-alpha-D-ribose 1''-phosphate + H2O = ADP-D-ribose + phosphate. Functionally, highly specific phosphatase involved in the metabolism of ADP-ribose 1''-phosphate (Appr1p) which is produced as a consequence of tRNA splicing. This chain is ADP-ribose 1''-phosphate phosphatase (poa1), found in Aspergillus fumigatus (strain ATCC MYA-4609 / CBS 101355 / FGSC A1100 / Af293) (Neosartorya fumigata).